Consider the following 559-residue polypeptide: Peptidyl-prolyl isomerase cwc27 (559 aa).

Residues 11–184 (PTASATLHTT…YPVKVVSCEV (174 aa)) form the PPIase cyclophilin-type domain. Disordered regions lie at residues 201–395 (ATAP…GFSS), 413–449 (ESAD…EDEE), and 518–559 (PRER…REKP). Basic and acidic residues predominate over residues 261-273 (APKKTSPEAEQQT). The span at 305–319 (LPDPESPARSPPQSP) shows a compositional bias: pro residues. 2 stretches are compositionally biased toward polar residues: residues 384-394 (GSSTNGVTGFS) and 425-442 (TSIS…AKSN).

The protein belongs to the cyclophilin-type PPIase family. CWC27 subfamily. As to quaternary structure, associated with the spliceosome.

The protein localises to the cytoplasm. Its subcellular location is the nucleus. It catalyses the reaction [protein]-peptidylproline (omega=180) = [protein]-peptidylproline (omega=0). In terms of biological role, PPIases accelerate the folding of proteins. It catalyzes the cis-trans isomerization of proline imidic peptide bonds in oligopeptides. Involved in pre-mRNA splicing. The polypeptide is Peptidyl-prolyl isomerase cwc27 (cwc27) (Aspergillus fumigatus (strain ATCC MYA-4609 / CBS 101355 / FGSC A1100 / Af293) (Neosartorya fumigata)).